A 426-amino-acid chain; its full sequence is Histidinol dehydrogenase (426 aa).

NAD(+) is bound by residues Tyr-130, Gln-187, and Asn-210. Residues Ser-233, Gln-255, and His-258 each contribute to the substrate site. The Zn(2+) site is built by Gln-255 and His-258. Catalysis depends on proton acceptor residues Glu-323 and His-324. Substrate-binding residues include His-324, Asp-357, Glu-411, and His-416. Asp-357 is a Zn(2+) binding site. His-416 provides a ligand contact to Zn(2+).

The protein belongs to the histidinol dehydrogenase family. Zn(2+) is required as a cofactor.

The enzyme catalyses L-histidinol + 2 NAD(+) + H2O = L-histidine + 2 NADH + 3 H(+). It functions in the pathway amino-acid biosynthesis; L-histidine biosynthesis; L-histidine from 5-phospho-alpha-D-ribose 1-diphosphate: step 9/9. Catalyzes the sequential NAD-dependent oxidations of L-histidinol to L-histidinaldehyde and then to L-histidine. The protein is Histidinol dehydrogenase (hisD) of Aquifex aeolicus (strain VF5).